We begin with the raw amino-acid sequence, 289 residues long: Carbonyl reductase [NADPH] 1 (289 aa).

Ser2 is modified (N-acetylserine). A Phosphoserine modification is found at Ser2. Residues 10-34 (VTGANKGIGFAIVRDLCRQFAGDVV), 63-64 (DI), and Asn90 contribute to the NADP(+) site. Glutathione-binding positions include 95–97 (FQL) and Gln106. Ser140 provides a ligand contact to substrate. Position 193–194 (193–194 (TY)) interacts with glutathione. Residue Tyr194 is the Proton acceptor of the active site. NADP(+)-binding positions include 194–198 (YGVTK) and 231–233 (VRT). The residue at position 239 (Lys239) is an N6-1-carboxyethyl lysine.

It belongs to the short-chain dehydrogenases/reductases (SDR) family. In terms of assembly, monomer. As to expression, expressed in kidney (at protein level).

The protein localises to the cytoplasm. It catalyses the reaction a secondary alcohol + NADP(+) = a ketone + NADPH + H(+). The enzyme catalyses prostaglandin E1 + NADP(+) = 15-oxoprostaglandin E1 + NADPH + H(+). The catalysed reaction is prostaglandin F2alpha + NADP(+) = prostaglandin E2 + NADPH + H(+). It carries out the reaction prostaglandin D2 + NADP(+) = 15-oxoprostaglandin D2 + NADPH + H(+). It catalyses the reaction prostaglandin E2 + NADP(+) = 15-oxoprostaglandin E2 + NADPH + H(+). The enzyme catalyses prostaglandin F2alpha + NADP(+) = 15-oxoprostaglandin F2alpha + NADPH + H(+). The catalysed reaction is menadione + NADPH + H(+) = menadiol + NADP(+). It carries out the reaction daunorubicin + NADPH + H(+) = 13-dihydrodaunorubicin + NADP(+). It catalyses the reaction S-nitrosoglutathione + NADPH + H(+) = S-(hydroxysulfenamide)glutathione + NADP(+). The enzyme catalyses a primary alcohol + NADP(+) = an aldehyde + NADPH + H(+). The catalysed reaction is cortisol + NADPH + H(+) = 20beta-dihydrocortisol + NADP(+). It carries out the reaction corticosterone + NADPH + H(+) = 20beta-dihydrocorticosterone + NADP(+). In terms of biological role, NADPH-dependent reductase with broad substrate specificity. Catalyzes the reduction of a wide variety of carbonyl compounds including quinones, prostaglandins, menadione, plus various xenobiotics. Catalyzes the reduction of the antitumor anthracyclines doxorubicin and daunorubicin to the cardiotoxic compounds doxorubicinol and daunorubicinol. Can convert prostaglandin E2 to prostaglandin F2-alpha. Can bind glutathione, which explains its higher affinity for glutathione-conjugated substrates. Catalyzes the reduction of S-nitrosoglutathione. In addition, participates in the glucocorticoid metabolism by catalyzing the NADPH-dependent cortisol/corticosterone into 20beta-dihydrocortisol (20b-DHF) or 20beta-corticosterone (20b-DHB), which are weak agonists of NR3C1 and NR3C2 in adipose tissue. The sequence is that of Carbonyl reductase [NADPH] 1 from Sus scrofa (Pig).